Here is a 328-residue protein sequence, read N- to C-terminus: D-cysteine desulfhydrase (328 aa).

Lys-51 is subject to N6-(pyridoxal phosphate)lysine.

This sequence belongs to the ACC deaminase/D-cysteine desulfhydrase family. As to quaternary structure, homodimer. Pyridoxal 5'-phosphate is required as a cofactor.

It catalyses the reaction D-cysteine + H2O = hydrogen sulfide + pyruvate + NH4(+) + H(+). Its function is as follows. Catalyzes the alpha,beta-elimination reaction of D-cysteine and of several D-cysteine derivatives. It could be a defense mechanism against D-cysteine. The chain is D-cysteine desulfhydrase from Salmonella agona (strain SL483).